We begin with the raw amino-acid sequence, 475 residues long: Glycogen synthase (475 aa).

K15 contributes to the ADP-alpha-D-glucose binding site.

This sequence belongs to the glycosyltransferase 1 family. Bacterial/plant glycogen synthase subfamily.

It catalyses the reaction [(1-&gt;4)-alpha-D-glucosyl](n) + ADP-alpha-D-glucose = [(1-&gt;4)-alpha-D-glucosyl](n+1) + ADP + H(+). Its pathway is glycan biosynthesis; glycogen biosynthesis. Synthesizes alpha-1,4-glucan chains using ADP-glucose. This Kosmotoga olearia (strain ATCC BAA-1733 / DSM 21960 / TBF 19.5.1) protein is Glycogen synthase.